Reading from the N-terminus, the 345-residue chain is Uroporphyrinogen decarboxylase (345 aa).

Substrate-binding positions include 27-31 (RQAGR), Phe46, Asp76, Tyr152, Ser207, and His320.

Belongs to the uroporphyrinogen decarboxylase family. As to quaternary structure, homodimer.

The protein localises to the cytoplasm. It carries out the reaction uroporphyrinogen III + 4 H(+) = coproporphyrinogen III + 4 CO2. It functions in the pathway porphyrin-containing compound metabolism; protoporphyrin-IX biosynthesis; coproporphyrinogen-III from 5-aminolevulinate: step 4/4. Its function is as follows. Catalyzes the decarboxylation of four acetate groups of uroporphyrinogen-III to yield coproporphyrinogen-III. In Geobacillus sp. (strain WCH70), this protein is Uroporphyrinogen decarboxylase.